The primary structure comprises 339 residues: Tetraacyldisaccharide 4'-kinase (339 aa).

Residue 62–69 participates in ATP binding; that stretch reads VAGGTGKT.

It belongs to the LpxK family.

The catalysed reaction is a lipid A disaccharide + ATP = a lipid IVA + ADP + H(+). It functions in the pathway glycolipid biosynthesis; lipid IV(A) biosynthesis; lipid IV(A) from (3R)-3-hydroxytetradecanoyl-[acyl-carrier-protein] and UDP-N-acetyl-alpha-D-glucosamine: step 6/6. In terms of biological role, transfers the gamma-phosphate of ATP to the 4'-position of a tetraacyldisaccharide 1-phosphate intermediate (termed DS-1-P) to form tetraacyldisaccharide 1,4'-bis-phosphate (lipid IVA). The sequence is that of Tetraacyldisaccharide 4'-kinase from Xylella fastidiosa (strain M23).